Reading from the N-terminus, the 324-residue chain is Probable 6-phosphogluconolactonase 4, chloroplastic (324 aa).

The transit peptide at methionine 1–alanine 63 directs the protein to the chloroplast. Positions alanine 19–histidine 43 are disordered.

Belongs to the glucosamine/galactosamine-6-phosphate isomerase family. 6-phosphogluconolactonase subfamily.

It is found in the plastid. The protein resides in the chloroplast. It carries out the reaction 6-phospho-D-glucono-1,5-lactone + H2O = 6-phospho-D-gluconate + H(+). The protein operates within carbohydrate degradation; pentose phosphate pathway; D-ribulose 5-phosphate from D-glucose 6-phosphate (oxidative stage): step 2/3. Hydrolysis of 6-phosphogluconolactone to 6-phosphogluconate. The chain is Probable 6-phosphogluconolactonase 4, chloroplastic from Oryza sativa subsp. japonica (Rice).